The chain runs to 1067 residues: Carbamoyl phosphate synthase large chain (1067 aa).

Residues 1–401 (MPLNKDIKKV…AFLKGIRSLE (401 aa)) form a carboxyphosphate synthetic domain region. The ATP site is built by Arg129, Arg169, Gly175, Gly176, Lys208, Val210, Glu215, Gly241, Ile242, His243, Gln284, and Glu298. Residues 133–327 (RDMMNRINQP…IAKVAAKIAL (195 aa)) form the ATP-grasp 1 domain. Mg(2+) is bound by residues Gln284, Glu298, and Asn300. Mn(2+)-binding residues include Gln284, Glu298, and Asn300. Positions 402 to 549 (IGKYSLEHKK…YSTYEQYDEV (148 aa)) are oligomerization domain. Positions 550–932 (VVSDNKKVVV…ALYKGFVGAS (383 aa)) are carbamoyl phosphate synthetic domain. Residues 674 to 864 (DDLLERLNIA…IVDIATRIML (191 aa)) form the ATP-grasp 2 domain. ATP-binding residues include Arg710, Lys749, Leu751, Glu755, Gly780, Val781, His782, Ser783, Gln823, and Glu835. The Mg(2+) site is built by Gln823, Glu835, and Asn837. Residues Gln823, Glu835, and Asn837 each contribute to the Mn(2+) site. The MGS-like domain occupies 933-1067 (MYTGDKGKTI…NRELEVFNLI (135 aa)). The allosteric domain stretch occupies residues 933–1067 (MYTGDKGKTI…NRELEVFNLI (135 aa)).

This sequence belongs to the CarB family. As to quaternary structure, composed of two chains; the small (or glutamine) chain promotes the hydrolysis of glutamine to ammonia, which is used by the large (or ammonia) chain to synthesize carbamoyl phosphate. Tetramer of heterodimers (alpha,beta)4. It depends on Mg(2+) as a cofactor. Mn(2+) is required as a cofactor.

It catalyses the reaction hydrogencarbonate + L-glutamine + 2 ATP + H2O = carbamoyl phosphate + L-glutamate + 2 ADP + phosphate + 2 H(+). It carries out the reaction hydrogencarbonate + NH4(+) + 2 ATP = carbamoyl phosphate + 2 ADP + phosphate + 2 H(+). It functions in the pathway amino-acid biosynthesis; L-arginine biosynthesis; carbamoyl phosphate from bicarbonate: step 1/1. The protein operates within pyrimidine metabolism; UMP biosynthesis via de novo pathway; (S)-dihydroorotate from bicarbonate: step 1/3. Functionally, large subunit of the glutamine-dependent carbamoyl phosphate synthetase (CPSase). CPSase catalyzes the formation of carbamoyl phosphate from the ammonia moiety of glutamine, carbonate, and phosphate donated by ATP, constituting the first step of 2 biosynthetic pathways, one leading to arginine and/or urea and the other to pyrimidine nucleotides. The large subunit (synthetase) binds the substrates ammonia (free or transferred from glutamine from the small subunit), hydrogencarbonate and ATP and carries out an ATP-coupled ligase reaction, activating hydrogencarbonate by forming carboxy phosphate which reacts with ammonia to form carbamoyl phosphate. The protein is Carbamoyl phosphate synthase large chain of Clostridium perfringens (strain 13 / Type A).